A 262-amino-acid chain; its full sequence is Acyl-[acyl-carrier-protein]--UDP-N-acetylglucosamine O-acyltransferase (262 aa).

The protein belongs to the transferase hexapeptide repeat family. LpxA subfamily. In terms of assembly, homotrimer.

It localises to the cytoplasm. It carries out the reaction a (3R)-hydroxyacyl-[ACP] + UDP-N-acetyl-alpha-D-glucosamine = a UDP-3-O-[(3R)-3-hydroxyacyl]-N-acetyl-alpha-D-glucosamine + holo-[ACP]. It functions in the pathway glycolipid biosynthesis; lipid IV(A) biosynthesis; lipid IV(A) from (3R)-3-hydroxytetradecanoyl-[acyl-carrier-protein] and UDP-N-acetyl-alpha-D-glucosamine: step 1/6. Involved in the biosynthesis of lipid A, a phosphorylated glycolipid that anchors the lipopolysaccharide to the outer membrane of the cell. This chain is Acyl-[acyl-carrier-protein]--UDP-N-acetylglucosamine O-acyltransferase, found in Burkholderia ambifaria (strain ATCC BAA-244 / DSM 16087 / CCUG 44356 / LMG 19182 / AMMD) (Burkholderia cepacia (strain AMMD)).